The primary structure comprises 171 residues: Deoxyuridine 5'-triphosphate nucleotidohydrolase (171 aa).

Glu143 provides a ligand contact to Mg(2+).

The protein belongs to the dUTPase family. As to quaternary structure, homotrimer. It depends on Mg(2+) as a cofactor.

It carries out the reaction dUTP + H2O = dUMP + diphosphate + H(+). It functions in the pathway pyrimidine metabolism; dUMP biosynthesis; dUMP from dCTP (dUTP route): step 2/2. Functionally, this enzyme is involved in nucleotide metabolism: it produces dUMP, the immediate precursor of thymidine nucleotides and it decreases the intracellular concentration of dUTP, preventing uracil incorporation into DNA. This is Deoxyuridine 5'-triphosphate nucleotidohydrolase (DUT) from Oryza sativa subsp. japonica (Rice).